Reading from the N-terminus, the 494-residue chain is Alpha-amylase-related protein (494 aa).

The signal sequence occupies residues 1–20; the sequence is MFKFASAVILCLVAASSTQA. Gln-21 is subject to Pyrrolidone carboxylic acid. Cys-48 and Cys-104 are oxidised to a cystine. Asn-118, Gln-169, and Asp-178 together coordinate Ca(2+). Residues Cys-157 and Cys-171 are joined by a disulfide bond. Arg-206 contacts chloride. The Nucleophile role is filled by Asp-208. His-212 contributes to the Ca(2+) binding site. Glu-245 functions as the Proton donor in the catalytic mechanism. Chloride contacts are provided by Asn-308 and Arg-343. 3 disulfide bridges follow: Cys-376-Cys-382, Cys-418-Cys-441, and Cys-448-Cys-460.

It belongs to the glycosyl hydrolase 13 family. As to quaternary structure, monomer. Ca(2+) is required as a cofactor. Chloride serves as cofactor.

The protein localises to the secreted. It carries out the reaction Endohydrolysis of (1-&gt;4)-alpha-D-glucosidic linkages in polysaccharides containing three or more (1-&gt;4)-alpha-linked D-glucose units.. This is Alpha-amylase-related protein (Amyrel) from Drosophila ercepeae (Fruit fly).